The sequence spans 685 residues: ATP-dependent permease MDL1 (685 aa).

The span at phenylalanine 48 to serine 70 shows a compositional bias: polar residues. The tract at residues phenylalanine 48–arginine 76 is disordered. Asparagine 63 carries an N-linked (GlcNAc...) asparagine glycan. The helical transmembrane segment at leucine 96–leucine 116 threads the bilayer. Positions isoleucine 97 to lysine 407 constitute an ABC transmembrane type-1 domain. The interval threonine 125 to aspartate 147 is disordered. Positions aspartate 129–aspartate 141 are enriched in acidic residues. The chain crosses the membrane as a helical span at residues phenylalanine 158–leucine 180. N-linked (GlcNAc...) asparagine glycosylation is present at asparagine 239. A helical transmembrane segment spans residues leucine 266–tyrosine 282. N-linked (GlcNAc...) asparagine glycosylation is present at asparagine 336. 2 helical membrane-spanning segments follow: residues glycine 353–alanine 373 and leucine 381–phenylalanine 401. The ABC transporter domain occupies isoleucine 440–lysine 680. Glycine 475–serine 482 contacts ATP. Asparagine 553 and asparagine 576 each carry an N-linked (GlcNAc...) asparagine glycan.

It belongs to the ABC transporter superfamily. ABCB family. Mitochondrial peptide exporter (TC 3.A.1.212) subfamily.

The protein localises to the membrane. The protein is ATP-dependent permease MDL1 (MDL1) of Candida albicans (Yeast).